The sequence spans 117 residues: Aspartate 1-decarboxylase (117 aa).

Catalysis depends on S25, which acts as the Schiff-base intermediate with substrate; via pyruvic acid. S25 carries the post-translational modification Pyruvic acid (Ser). Substrate is bound at residue T57. Residue Y58 is the Proton donor of the active site. 72–74 (GAA) provides a ligand contact to substrate.

This sequence belongs to the PanD family. As to quaternary structure, heterooctamer of four alpha and four beta subunits. It depends on pyruvate as a cofactor. Is synthesized initially as an inactive proenzyme, which is activated by self-cleavage at a specific serine bond to produce a beta-subunit with a hydroxyl group at its C-terminus and an alpha-subunit with a pyruvoyl group at its N-terminus.

Its subcellular location is the cytoplasm. The enzyme catalyses L-aspartate + H(+) = beta-alanine + CO2. It functions in the pathway cofactor biosynthesis; (R)-pantothenate biosynthesis; beta-alanine from L-aspartate: step 1/1. Functionally, catalyzes the pyruvoyl-dependent decarboxylation of aspartate to produce beta-alanine. The sequence is that of Aspartate 1-decarboxylase from Helicobacter pylori (strain ATCC 700392 / 26695) (Campylobacter pylori).